A 425-amino-acid polypeptide reads, in one-letter code: Orexin/Hypocretin receptor type 1 (425 aa).

Over 1 to 46 (MEPSATPGPQMGVPTGVGDPSLVPPDYEEEFLSYLWRDYLYPKQYE) the chain is Extracellular. The interval 26–41 (DYEEEFLSYLWRDYLY) is required for response to orexin-A. A helical transmembrane segment spans residues 47–67 (WVLIAAYVAVFLVALVGNTLV). Over 68–82 (CLAVWRNHHMRTVTN) the chain is Cytoplasmic. A helical membrane pass occupies residues 83 to 105 (YFIVNLSLADVLVTAICLPASLL). Over 106–119 (VDITESWLFGHALC) the chain is Extracellular. Cys-119 and Cys-202 form a disulfide bridge. A helical transmembrane segment spans residues 120–140 (KVIPYLQAVSVSVAVLTLSFI). The Cytoplasmic portion of the chain corresponds to 141–160 (ALDRWYAIYHPLLFKSTARR). A helical membrane pass occupies residues 161 to 182 (ARGSILGIWAVSPAVMVPQAAV). At 183–213 (MECSSVLPELANRTRLFSVCDERWADDLYPK) the chain is on the extracellular side. A helical membrane pass occupies residues 214–235 (IYHSCFFIVTYLAPLGLMAMAY). The Cytoplasmic portion of the chain corresponds to 236-298 (FQIFRKLWGR…QMRARRKTAK (63 aa)). The helical transmembrane segment at 299 to 321 (MLMVVLLVFALCYLPISVLNVLK) threads the bilayer. Residues 322 to 336 (RVFGMFRQTSDREAV) lie on the Extracellular side of the membrane. Residues 337–360 (YACFTFSHWLVYANSAANPIIYNF) form a helical membrane-spanning segment. Residues 361 to 425 (LSGKFREQFK…VLTSVTTVLP (65 aa)) lie on the Cytoplasmic side of the membrane.

Belongs to the G-protein coupled receptor 1 family.

Its subcellular location is the cell membrane. Moderately selective excitatory receptor for orexin-A and, with a lower affinity, for orexin-B neuropeptide. Triggers an increase in cytoplasmic Ca(2+) levels in response to orexin-A binding. The polypeptide is Orexin/Hypocretin receptor type 1 (Sus scrofa (Pig)).